The sequence spans 313 residues: B3 domain-containing transcription factor FUS3 (313 aa).

The segment at residues 92–194 (FQKELKNSDV…NYVIQARKAS (103 aa)) is a DNA-binding region (TF-B3).

As to quaternary structure, interacts with KIN10. Phosphorylation by KIN10 increases its stability. Phosphorylated at one or more of the Ser-55, Ser-56 and/or Ser-57 residues. As to expression, expressed in cotyledons and hypocotyls.

The protein localises to the nucleus. With respect to regulation, phosphorylation by KIN10 is required to positively regulates embryogenesis, seed yield, and plant growth at high temperature. Functionally, transcription regulator involved in gene regulation during late embryogenesis. Its expression to the epidermis is sufficient to control foliar organ identity by regulating positively the synthesis abscisic acid (ABA) and negatively gibberellin production. Negatively regulates TTG1 in the embryo. Positively regulates the abundance of the ABI3 protein in the seed. Cooperates with KIN10 to regulate developmental phase transitions and lateral organ development and act both as positive regulators of abscisic acid (ABA) signaling during germination. The sequence is that of B3 domain-containing transcription factor FUS3 (FUS3) from Arabidopsis thaliana (Mouse-ear cress).